Here is a 183-residue protein sequence, read N- to C-terminus: Threonylcarbamoyl-AMP synthase (183 aa).

One can recognise a YrdC-like domain in the interval Met-1–Gly-183.

This sequence belongs to the SUA5 family. TsaC subfamily.

Its subcellular location is the cytoplasm. It catalyses the reaction L-threonine + hydrogencarbonate + ATP = L-threonylcarbamoyladenylate + diphosphate + H2O. Functionally, required for the formation of a threonylcarbamoyl group on adenosine at position 37 (t(6)A37) in tRNAs that read codons beginning with adenine. Catalyzes the conversion of L-threonine, HCO(3)(-)/CO(2) and ATP to give threonylcarbamoyl-AMP (TC-AMP) as the acyladenylate intermediate, with the release of diphosphate. The protein is Threonylcarbamoyl-AMP synthase of Actinobacillus succinogenes (strain ATCC 55618 / DSM 22257 / CCUG 43843 / 130Z).